The chain runs to 99 residues: Aphid transmission protein (99 aa).

Belongs to the caulimoviridae ORF II family.

Functionally, this protein is involved in virus transmission. This is Aphid transmission protein from Cauliflower mosaic virus (strain W260) (CaMV).